The sequence spans 59 residues: Cuticle protein 7 isoform b (59 aa).

The residue at position 1 (Gln1) is a Pyrrolidone carboxylic acid.

The polypeptide is Cuticle protein 7 isoform b (Limulus polyphemus (Atlantic horseshoe crab)).